The sequence spans 549 residues: CTP synthase (549 aa).

Residues 1 to 267 (MAKFVFITGG…CREVLDVLQL (267 aa)) are amidoligase domain. CTP is bound at residue S13. Residue S13 participates in UTP binding. ATP is bound by residues 14-19 (SIGKGI) and D71. Mg(2+) is bound by residues D71 and E141. Residues 148-150 (DIE), 188-193 (KTKPTQ), and K224 each bind CTP. Residues 188–193 (KTKPTQ) and K224 contribute to the UTP site. A Glutamine amidotransferase type-1 domain is found at 292-534 (KVALVGKYVQ…IEAAQQRLPD (243 aa)). G354 is a binding site for L-glutamine. The active-site Nucleophile; for glutamine hydrolysis is C381. L-glutamine is bound by residues 382-385 (LGMQ), E405, and R462. Catalysis depends on residues H507 and E509.

Belongs to the CTP synthase family. As to quaternary structure, homotetramer.

The enzyme catalyses UTP + L-glutamine + ATP + H2O = CTP + L-glutamate + ADP + phosphate + 2 H(+). The catalysed reaction is L-glutamine + H2O = L-glutamate + NH4(+). It catalyses the reaction UTP + NH4(+) + ATP = CTP + ADP + phosphate + 2 H(+). It participates in pyrimidine metabolism; CTP biosynthesis via de novo pathway; CTP from UDP: step 2/2. Allosterically activated by GTP, when glutamine is the substrate; GTP has no effect on the reaction when ammonia is the substrate. The allosteric effector GTP functions by stabilizing the protein conformation that binds the tetrahedral intermediate(s) formed during glutamine hydrolysis. Inhibited by the product CTP, via allosteric rather than competitive inhibition. In terms of biological role, catalyzes the ATP-dependent amination of UTP to CTP with either L-glutamine or ammonia as the source of nitrogen. Regulates intracellular CTP levels through interactions with the four ribonucleotide triphosphates. This is CTP synthase from Synechococcus sp. (strain CC9902).